The chain runs to 270 residues: Fluoride-specific ion channel FluC 2 (270 aa).

Transmembrane regions (helical) follow at residues 4 to 24 (IIIL…FIML), 35 to 55 (LDIL…TALY), 67 to 87 (IIGT…YGSV), and 96 to 116 (AFLI…VAVL). 2 residues coordinate Na(+): Gly74 and Ser77.

It belongs to the fluoride channel Fluc/FEX (TC 1.A.43) family.

The protein resides in the cell inner membrane. The enzyme catalyses fluoride(in) = fluoride(out). Na(+) is not transported, but it plays an essential structural role and its presence is essential for fluoride channel function. Functionally, fluoride-specific ion channel. Important for reducing fluoride concentration in the cell, thus reducing its toxicity. This chain is Fluoride-specific ion channel FluC 2, found in Brucella melitensis biotype 1 (strain ATCC 23456 / CCUG 17765 / NCTC 10094 / 16M).